A 173-amino-acid polypeptide reads, in one-letter code: Crossover junction endodeoxyribonuclease RuvC (173 aa).

Catalysis depends on residues Asp-8, Glu-67, and Asp-139. The Mg(2+) site is built by Asp-8, Glu-67, and Asp-139.

The protein belongs to the RuvC family. Homodimer which binds Holliday junction (HJ) DNA. The HJ becomes 2-fold symmetrical on binding to RuvC with unstacked arms; it has a different conformation from HJ DNA in complex with RuvA. In the full resolvosome a probable DNA-RuvA(4)-RuvB(12)-RuvC(2) complex forms which resolves the HJ. Mg(2+) serves as cofactor.

The protein localises to the cytoplasm. The enzyme catalyses Endonucleolytic cleavage at a junction such as a reciprocal single-stranded crossover between two homologous DNA duplexes (Holliday junction).. Its function is as follows. The RuvA-RuvB-RuvC complex processes Holliday junction (HJ) DNA during genetic recombination and DNA repair. Endonuclease that resolves HJ intermediates. Cleaves cruciform DNA by making single-stranded nicks across the HJ at symmetrical positions within the homologous arms, yielding a 5'-phosphate and a 3'-hydroxyl group; requires a central core of homology in the junction. The consensus cleavage sequence is 5'-(A/T)TT(C/G)-3'. Cleavage occurs on the 3'-side of the TT dinucleotide at the point of strand exchange. HJ branch migration catalyzed by RuvA-RuvB allows RuvC to scan DNA until it finds its consensus sequence, where it cleaves and resolves the cruciform DNA. The sequence is that of Crossover junction endodeoxyribonuclease RuvC from Proteus mirabilis (strain HI4320).